The following is an 875-amino-acid chain: Probable dipeptidyl-aminopeptidase B (875 aa).

Positions 1–90 (MSEPKPIQDT…ASSETTPPRK (90 aa)) are disordered. Topologically, residues 1 to 98 (MSEPKPIQDT…RKGVDRKLKK (98 aa)) are cytoplasmic. The segment covering 19–28 (SSISSASTTS) has biased composition (low complexity). Positions 33-46 (RLAEESEKNHDASS) are enriched in basic and acidic residues. A helical; Signal-anchor for type II membrane protein transmembrane segment spans residues 99 to 119 (VLLIVGGFFVAAWIVSLVVFL). Topologically, residues 120–875 (TNKSYKHGSQ…VNDAKPKIES (756 aa)) are vacuolar. N-linked (GlcNAc...) asparagine glycans are attached at residues asparagine 354 and asparagine 567. Residues 689–715 (VDFQSSDGGRRTTRSPRRATGRPSATS) form a disordered region. Positions 699–708 (RTTRSPRRAT) are enriched in basic residues. Serine 726 acts as the Charge relay system in catalysis. Asparagine 785 is a glycosylation site (N-linked (GlcNAc...) asparagine). Residues aspartate 803 and histidine 836 each act as charge relay system in the active site.

This sequence belongs to the peptidase S9B family.

The protein resides in the vacuole membrane. The enzyme catalyses Release of an N-terminal dipeptide, Xaa-Yaa-|-Zaa-, from a polypeptide, preferentially when Yaa is Pro, provided Zaa is neither Pro nor hydroxyproline.. In terms of biological role, type IV dipeptidyl-peptidase which removes N-terminal dipeptides sequentially from polypeptides having unsubstituted N-termini provided that the penultimate residue is proline. This is Probable dipeptidyl-aminopeptidase B (DAPB) from Verticillium alfalfae (strain VaMs.102 / ATCC MYA-4576 / FGSC 10136) (Verticillium wilt of alfalfa).